A 357-amino-acid polypeptide reads, in one-letter code: Protein-glutamate methylesterase/protein-glutamine glutaminase 1 (357 aa).

The 118-residue stretch at 10-127 folds into the Response regulatory domain; that stretch reads RTLIVDDSAF…DVNKIEKELV (118 aa). Residue Asp61 is modified to 4-aspartylphosphate. In terms of domain architecture, CheB-type methylesterase spans 159-353; sequence SCAGDFAVLI…EEIVRMSEVK (195 aa). Active-site residues include Ser171, His198, and Asp295.

Belongs to the CheB family. Post-translationally, phosphorylated by CheA. Phosphorylation of the N-terminal regulatory domain activates the methylesterase activity.

The protein resides in the cytoplasm. It carries out the reaction [protein]-L-glutamate 5-O-methyl ester + H2O = L-glutamyl-[protein] + methanol + H(+). The catalysed reaction is L-glutaminyl-[protein] + H2O = L-glutamyl-[protein] + NH4(+). Its function is as follows. Involved in chemotaxis. Part of a chemotaxis signal transduction system that modulates chemotaxis in response to various stimuli. Catalyzes the demethylation of specific methylglutamate residues introduced into the chemoreceptors (methyl-accepting chemotaxis proteins or MCP) by CheR. Also mediates the irreversible deamidation of specific glutamine residues to glutamic acid. The polypeptide is Protein-glutamate methylesterase/protein-glutamine glutaminase 1 (Methanosarcina mazei (strain ATCC BAA-159 / DSM 3647 / Goe1 / Go1 / JCM 11833 / OCM 88) (Methanosarcina frisia)).